The primary structure comprises 265 residues: Undecaprenyl-diphosphatase (265 aa).

7 consecutive transmembrane segments (helical) span residues 38 to 58 (SDMF…IIYW), 80 to 100 (LIVA…LGFE), 107 to 127 (PIAW…WAAA), 135 to 155 (ITWL…VFPG), 175 to 195 (AAAT…ASGY), 213 to 233 (ALAI…KWLL), and 244 to 264 (FAIY…TGMI).

This sequence belongs to the UppP family.

The protein localises to the cell inner membrane. The catalysed reaction is di-trans,octa-cis-undecaprenyl diphosphate + H2O = di-trans,octa-cis-undecaprenyl phosphate + phosphate + H(+). Its function is as follows. Catalyzes the dephosphorylation of undecaprenyl diphosphate (UPP). Confers resistance to bacitracin. The sequence is that of Undecaprenyl-diphosphatase from Rhizobium etli (strain ATCC 51251 / DSM 11541 / JCM 21823 / NBRC 15573 / CFN 42).